A 905-amino-acid polypeptide reads, in one-letter code: Coatomer subunit beta' (905 aa).

WD repeat units lie at residues Ala-13 to Thr-52, Val-55 to Met-94, Ala-97 to Gln-136, Gly-140 to Thr-180, Gly-183 to Thr-224, Gly-227 to Thr-266, Ser-350 to Phe-388, and Ser-390 to Lys-425. The residue at position 627 (Lys-627) is an N6-acetyllysine. A WD 9 repeat occupies Ile-746 to Lys-783. The disordered stretch occupies residues Glu-837–Asp-905. Ser-859 carries the post-translational modification Phosphoserine. The stretch at Gln-867–Ile-891 forms a coiled coil. Positions Glu-878–Asp-905 are enriched in acidic residues.

The protein belongs to the WD repeat COPB2 family. Oligomeric complex that consists of at least the alpha, beta, beta', gamma, delta, epsilon and zeta subunits. Probably interacts with PEX11A. Interacts with JAGN1. Interacts with SCYL1.

It localises to the cytoplasm. The protein localises to the cytosol. Its subcellular location is the golgi apparatus membrane. It is found in the cytoplasmic vesicle. The protein resides in the COPI-coated vesicle membrane. Its function is as follows. The coatomer is a cytosolic protein complex that binds to dilysine motifs and reversibly associates with Golgi non-clathrin-coated vesicles, which further mediate biosynthetic protein transport from the ER, via the Golgi up to the trans Golgi network. Coatomer complex is required for budding from Golgi membranes, and is essential for the retrograde Golgi-to-ER transport of dilysine-tagged proteins. In mammals, the coatomer can only be recruited by membranes associated to ADP-ribosylation factors (ARFs), which are small GTP-binding proteins; the complex also influences the Golgi structural integrity, as well as the processing, activity, and endocytic recycling of LDL receptors. In terms of biological role, this coatomer complex protein, essential for Golgi budding and vesicular trafficking, is a selective binding protein (RACK) for protein kinase C, epsilon type. It binds to Golgi membranes in a GTP-dependent manner. The protein is Coatomer subunit beta' (Copb2) of Rattus norvegicus (Rat).